A 195-amino-acid chain; its full sequence is Molybdenum cofactor guanylyltransferase (195 aa).

Residues 10–12 (LAG), Lys23, Asn51, Asp69, and Asp99 each bind GTP. Position 99 (Asp99) interacts with Mg(2+).

The protein belongs to the MobA family. As to quaternary structure, monomer. Mg(2+) serves as cofactor.

It localises to the cytoplasm. The enzyme catalyses Mo-molybdopterin + GTP + H(+) = Mo-molybdopterin guanine dinucleotide + diphosphate. Functionally, transfers a GMP moiety from GTP to Mo-molybdopterin (Mo-MPT) cofactor (Moco or molybdenum cofactor) to form Mo-molybdopterin guanine dinucleotide (Mo-MGD) cofactor. The chain is Molybdenum cofactor guanylyltransferase from Shewanella putrefaciens (strain CN-32 / ATCC BAA-453).